We begin with the raw amino-acid sequence, 110 residues long: Coiled-coil-helix-coiled-coil-helix domain-containing protein 5 (110 aa).

The residue at position 1 (Met1) is an N-acetylmethionine. CHCH domains are found at residues 9 to 52 and 55 to 97; these read ARYC…PIIR and RQAC…QPPS. 4 short sequence motifs (cx9C motif) span residues 12 to 22, 34 to 44, 58 to 68, and 79 to 89; these read CSRELDQYGQC, CHHLKMSIARC, CAEPFEAFEKC, and CAEHMRRFLQC. Cystine bridges form between Cys12–Cys44, Cys22–Cys34, Cys58–Cys89, and Cys68–Cys79.

In terms of assembly, monomer.

The protein localises to the mitochondrion intermembrane space. In Mus musculus (Mouse), this protein is Coiled-coil-helix-coiled-coil-helix domain-containing protein 5 (Chchd5).